The sequence spans 243 residues: ATP synthase subunit b, mitochondrial (243 aa).

This sequence belongs to the eukaryotic ATPase B chain family. As to quaternary structure, F-type ATPases have 2 components, CF(1) - the catalytic core - and CF(0) - the membrane proton channel. CF(1) has five subunits: alpha(3), beta(3), gamma(1), delta(1), epsilon(1). CF(0) has three main subunits: a, b and c.

The protein resides in the mitochondrion. Its subcellular location is the mitochondrion inner membrane. In terms of biological role, mitochondrial membrane ATP synthase (F(1)F(0) ATP synthase or Complex V) produces ATP from ADP in the presence of a proton gradient across the membrane which is generated by electron transport complexes of the respiratory chain. F-type ATPases consist of two structural domains, F(1) - containing the extramembraneous catalytic core, and F(0) - containing the membrane proton channel, linked together by a central stalk and a peripheral stalk. During catalysis, ATP synthesis in the catalytic domain of F(1) is coupled via a rotary mechanism of the central stalk subunits to proton translocation. Part of the complex F(0) domain and the peripheric stalk, which acts as a stator to hold the catalytic alpha(3)beta(3) subcomplex and subunit a/ATP6 static relative to the rotary elements. The polypeptide is ATP synthase subunit b, mitochondrial (Drosophila melanogaster (Fruit fly)).